The sequence spans 137 residues: Envelope glycoprotein L (137 aa).

The signal sequence occupies residues Met1 to Ala25. The segment at Asn23 to Leu128 is interaction with gH. 2 disulfides stabilise this stretch: Cys28-Cys56 and Cys29-Cys79.

It belongs to the herpesviridae glycoprotein L family. In terms of assembly, interacts with glycoprotein H (gH); this interaction is necessary for the correct processing and cell surface expression of gH. The heterodimer gH/gL seems to interact with gB trimers during fusion. The heterodimer gH/gL interacts with host EPHA2 to facilitate virus internalization and fusion.

The protein localises to the virion membrane. The protein resides in the host cell membrane. Its subcellular location is the host Golgi apparatus. It is found in the host trans-Golgi network. Functionally, the heterodimer glycoprotein H-glycoprotein L is required for the fusion of viral and plasma membranes leading to virus entry into the host cell. Acts as a functional inhibitor of gH and maintains gH in an inhibited form. Upon binding to host integrins, gL dissociates from gH leading to activation of the viral fusion glycoproteins gB and gH. The heterodimer gH/gL targets also host EPHA2 to promote viral entry. The sequence is that of Envelope glycoprotein L from Homo sapiens (Human).